A 621-amino-acid polypeptide reads, in one-letter code: Probable serine/threonine-protein kinase WNK2 (621 aa).

Positions Gly-28 to Leu-286 constitute a Protein kinase domain. Residues Thr-108–Phe-111 and Lys-158 each bind ATP. Asp-175 acts as the Proton acceptor in catalysis. 4 disordered regions span residues Ser-438–Pro-490, Val-501–Asp-520, Gly-527–Ser-553, and His-600–Pro-621.

This sequence belongs to the protein kinase superfamily. Ser/Thr protein kinase family. WNK subfamily.

It catalyses the reaction L-seryl-[protein] + ATP = O-phospho-L-seryl-[protein] + ADP + H(+). The enzyme catalyses L-threonyl-[protein] + ATP = O-phospho-L-threonyl-[protein] + ADP + H(+). The chain is Probable serine/threonine-protein kinase WNK2 (WNK2) from Oryza sativa subsp. japonica (Rice).